The sequence spans 339 residues: DNA-directed RNA polymerase subunit alpha (339 aa).

Residues 1–237 (MENELMYMNW…EQMNVFINFD (237 aa)) are alpha N-terminal domain (alpha-NTD). The segment at 256-339 (FNENLYRSVN…PPAEDNKEGE (84 aa)) is alpha C-terminal domain (alpha-CTD).

The protein belongs to the RNA polymerase alpha chain family. In terms of assembly, homodimer. The RNAP catalytic core consists of 2 alpha, 1 beta, 1 beta' and 1 omega subunit. When a sigma factor is associated with the core the holoenzyme is formed, which can initiate transcription.

It catalyses the reaction RNA(n) + a ribonucleoside 5'-triphosphate = RNA(n+1) + diphosphate. In terms of biological role, DNA-dependent RNA polymerase catalyzes the transcription of DNA into RNA using the four ribonucleoside triphosphates as substrates. The polypeptide is DNA-directed RNA polymerase subunit alpha (Desulfosudis oleivorans (strain DSM 6200 / JCM 39069 / Hxd3) (Desulfococcus oleovorans)).